The primary structure comprises 334 residues: Oligopeptide transport ATP-binding protein OppF (334 aa).

The ABC transporter domain occupies 12–265 (LEIADLKVHF…PLHPYTKALM (254 aa)). 57-64 (GESGCGKS) serves as a coordination point for ATP.

Belongs to the ABC transporter superfamily. In terms of assembly, the complex is composed of two ATP-binding proteins (OppD and OppF), two transmembrane proteins (OppB and OppC) and a solute-binding protein (OppA).

The protein resides in the cell inner membrane. The catalysed reaction is a [peptide](out) + ATP + H2O = a [peptide](in) + ADP + phosphate + H(+). It carries out the reaction L-alanyl-gamma-D-glutamyl-meso-2,6-diaminopimelate(out) + ATP + H2O = L-alanyl-gamma-D-glutamyl-meso-2,6-diaminopimelate(in) + ADP + phosphate + H(+). Part of the ABC transporter complex OppABCDF involved in the uptake of oligopeptides, including the cell wall murein tripeptide L-alanyl-gamma-D-glutamyl-meso-diaminopimelate. Probably responsible for energy coupling to the transport system. Plays an important nutritional role and is involved in the recycling of cell wall peptides. The chain is Oligopeptide transport ATP-binding protein OppF from Salmonella typhimurium (strain LT2 / SGSC1412 / ATCC 700720).